Reading from the N-terminus, the 352-residue chain is 3-isopropylmalate dehydrogenase (352 aa).

NAD(+) is bound at residue 76-89 (GPKWENLPHEHKPE). 4 residues coordinate substrate: Arg-96, Arg-106, Arg-134, and Asp-219. Mg(2+) contacts are provided by Asp-219, Asp-243, and Asp-247. Residue 276–288 (GSAPDIAGQNKAN) coordinates NAD(+).

This sequence belongs to the isocitrate and isopropylmalate dehydrogenases family. LeuB type 1 subfamily. Homodimer. Requires Mg(2+) as cofactor. Mn(2+) serves as cofactor.

The protein localises to the cytoplasm. It catalyses the reaction (2R,3S)-3-isopropylmalate + NAD(+) = 4-methyl-2-oxopentanoate + CO2 + NADH. It functions in the pathway amino-acid biosynthesis; L-leucine biosynthesis; L-leucine from 3-methyl-2-oxobutanoate: step 3/4. Its function is as follows. Catalyzes the oxidation of 3-carboxy-2-hydroxy-4-methylpentanoate (3-isopropylmalate) to 3-carboxy-4-methyl-2-oxopentanoate. The product decarboxylates to 4-methyl-2 oxopentanoate. In Chlorobium chlorochromatii (strain CaD3), this protein is 3-isopropylmalate dehydrogenase.